Consider the following 125-residue polypeptide: Putative RNA polymerase sigma-G factor (125 aa).

It belongs to the sigma-70 factor family.

In terms of biological role, sigma factors are initiation factors that promote the attachment of RNA polymerase to specific initiation sites and are then released. In Bacillus thuringiensis subsp. kurstaki, this protein is Putative RNA polymerase sigma-G factor.